An 805-amino-acid polypeptide reads, in one-letter code: Putative cation-transporting ATPase MJ1226 (805 aa).

4 consecutive transmembrane segments (helical) span residues S53–I73, H75–W95, I226–L246, and F258–T278. D311 serves as the catalytic 4-aspartylphosphate intermediate. 6 consecutive transmembrane segments (helical) span residues Y615 to L637, P641 to Y663, I680 to Y700, E712 to I734, L747 to M769, and G773 to I790.

Belongs to the cation transport ATPase (P-type) (TC 3.A.3) family. Type IIIA subfamily.

The protein localises to the cell membrane. It carries out the reaction ATP + H2O = ADP + phosphate + H(+). The polypeptide is Putative cation-transporting ATPase MJ1226 (Methanocaldococcus jannaschii (strain ATCC 43067 / DSM 2661 / JAL-1 / JCM 10045 / NBRC 100440) (Methanococcus jannaschii)).